The primary structure comprises 251 residues: Membrane-anchored junction protein (251 aa).

The Nuclear portion of the chain corresponds to 1 to 227 (MSLKPFTYPF…HSNPPPLKEP (227 aa)). The segment at 140–225 (RKRKLMEEPS…LEHSNPPPLK (86 aa)) is disordered. Residues 183-198 (EDSQQDTPASDSTAVT) are compositionally biased toward polar residues. A helical transmembrane segment spans residues 228 to 246 (AARGFLGFLSALFPFRYFF). At 247-251 (RKSTQ) the chain is on the perinuclear space side.

Belongs to the MAJIN family. As to quaternary structure, component of the MAJIN-TERB1-TERB2 complex, composed of MAJIN, TERB1 and TERB2.

The protein localises to the nucleus inner membrane. Its subcellular location is the chromosome. It is found in the telomere. Functionally, meiosis-specific telomere-associated protein involved in meiotic telomere attachment to the nucleus inner membrane, a crucial step for homologous pairing and synapsis. Component of the MAJIN-TERB1-TERB2 complex, which promotes telomere cap exchange by mediating attachment of telomeric DNA to the inner nuclear membrane and replacement of the protective cap of telomeric chromosomes: in early meiosis, the MAJIN-TERB1-TERB2 complex associates with telomeric DNA and the shelterin/telosome complex. During prophase, the complex matures and promotes release of the shelterin/telosome complex from telomeric DNA. In the complex, MAJIN acts as the anchoring subunit to the nucleus inner membrane. MAJIN shows DNA-binding activity, possibly for the stabilization of telomere attachment on the nucleus inner membrane. This chain is Membrane-anchored junction protein, found in Rattus norvegicus (Rat).